A 123-amino-acid chain; its full sequence is MTRVLLRTFPPGAKPPVRNSWVCMRKTESTTYSSKNQGAQVMVAVMKFSEDIPLTTLLETAPECEEILMKYGLQKIKEDGVYEIVVPRLTLRGFITLMNLKEKERDELVSKLEEIYNKKLSGG.

This is an uncharacterized protein from Aquifex aeolicus (strain VF5).